A 304-amino-acid polypeptide reads, in one-letter code: Acetyl-coenzyme A carboxylase carboxyl transferase subunit beta (304 aa).

The CoA carboxyltransferase N-terminal domain occupies 29–298 (LWTKCVSCAA…QAYRPSPQAS (270 aa)). 4 residues coordinate Zn(2+): Cys-33, Cys-36, Cys-52, and Cys-55. The C4-type zinc finger occupies 33-55 (CVSCAALHYTKDFQLNLCVCPAC).

Belongs to the AccD/PCCB family. As to quaternary structure, acetyl-CoA carboxylase is a heterohexamer composed of biotin carboxyl carrier protein (AccB), biotin carboxylase (AccC) and two subunits each of ACCase subunit alpha (AccA) and ACCase subunit beta (AccD). It depends on Zn(2+) as a cofactor.

The protein localises to the cytoplasm. The enzyme catalyses N(6)-carboxybiotinyl-L-lysyl-[protein] + acetyl-CoA = N(6)-biotinyl-L-lysyl-[protein] + malonyl-CoA. Its pathway is lipid metabolism; malonyl-CoA biosynthesis; malonyl-CoA from acetyl-CoA: step 1/1. In terms of biological role, component of the acetyl coenzyme A carboxylase (ACC) complex. Biotin carboxylase (BC) catalyzes the carboxylation of biotin on its carrier protein (BCCP) and then the CO(2) group is transferred by the transcarboxylase to acetyl-CoA to form malonyl-CoA. This chain is Acetyl-coenzyme A carboxylase carboxyl transferase subunit beta, found in Gloeobacter violaceus (strain ATCC 29082 / PCC 7421).